A 353-amino-acid polypeptide reads, in one-letter code: Protein-glutamate methylesterase/protein-glutamine glutaminase 4 (353 aa).

Residues 7–124 (RILVAEDSPT…SPDFDADSRR (118 aa)) form the Response regulatory domain. Asp-58 is modified (4-aspartylphosphate). Positions 158–350 (PVSPTRPGVV…SRLTSAFRGS (193 aa)) constitute a CheB-type methylesterase domain. Active-site residues include Ser-172, His-199, and Asp-292.

The protein belongs to the CheB family. Post-translationally, phosphorylated by CheA. Phosphorylation of the N-terminal regulatory domain activates the methylesterase activity.

Its subcellular location is the cytoplasm. The enzyme catalyses [protein]-L-glutamate 5-O-methyl ester + H2O = L-glutamyl-[protein] + methanol + H(+). The catalysed reaction is L-glutaminyl-[protein] + H2O = L-glutamyl-[protein] + NH4(+). In terms of biological role, involved in chemotaxis. Part of a chemotaxis signal transduction system that modulates chemotaxis in response to various stimuli. Catalyzes the demethylation of specific methylglutamate residues introduced into the chemoreceptors (methyl-accepting chemotaxis proteins or MCP) by CheR. Also mediates the irreversible deamidation of specific glutamine residues to glutamic acid. The polypeptide is Protein-glutamate methylesterase/protein-glutamine glutaminase 4 (Myxococcus xanthus (strain DK1622)).